A 509-amino-acid chain; its full sequence is Bifunctional purine biosynthesis protein PurH (509 aa).

An MGS-like domain is found at 1–144; the sequence is MKRALISVSD…KNYAAVTVVV (144 aa).

It belongs to the PurH family.

It carries out the reaction (6R)-10-formyltetrahydrofolate + 5-amino-1-(5-phospho-beta-D-ribosyl)imidazole-4-carboxamide = 5-formamido-1-(5-phospho-D-ribosyl)imidazole-4-carboxamide + (6S)-5,6,7,8-tetrahydrofolate. The catalysed reaction is IMP + H2O = 5-formamido-1-(5-phospho-D-ribosyl)imidazole-4-carboxamide. It participates in purine metabolism; IMP biosynthesis via de novo pathway; 5-formamido-1-(5-phospho-D-ribosyl)imidazole-4-carboxamide from 5-amino-1-(5-phospho-D-ribosyl)imidazole-4-carboxamide (10-formyl THF route): step 1/1. The protein operates within purine metabolism; IMP biosynthesis via de novo pathway; IMP from 5-formamido-1-(5-phospho-D-ribosyl)imidazole-4-carboxamide: step 1/1. The sequence is that of Bifunctional purine biosynthesis protein PurH from Listeria monocytogenes serotype 4b (strain CLIP80459).